The chain runs to 183 residues: MVMNRERLAEMLLEVGALKFGDFVLSSGKRSDYYVDIKEACTHPKVLDALTDALLEVLPDGDVLAGPELGAVPLVSVLSVKAGLPMAIVRKRKKEYGTGERIVGDVRGRKVVLVDDVATTGGSLLEALEAIEEEGGEVRDAVVVVDRQEGAEEALKERGVRLSSVLTADDLRGLRDAESTARG.

Residues Arg90, Lys91, Lys94, and 115 to 123 (DDVATTGGS) contribute to the 5-phospho-alpha-D-ribose 1-diphosphate site. Orotate is bound by residues Thr119 and Arg147.

The protein belongs to the purine/pyrimidine phosphoribosyltransferase family. PyrE subfamily. Homodimer. Mg(2+) serves as cofactor.

It catalyses the reaction orotidine 5'-phosphate + diphosphate = orotate + 5-phospho-alpha-D-ribose 1-diphosphate. It functions in the pathway pyrimidine metabolism; UMP biosynthesis via de novo pathway; UMP from orotate: step 1/2. Functionally, catalyzes the transfer of a ribosyl phosphate group from 5-phosphoribose 1-diphosphate to orotate, leading to the formation of orotidine monophosphate (OMP). In Methanopyrus kandleri (strain AV19 / DSM 6324 / JCM 9639 / NBRC 100938), this protein is Orotate phosphoribosyltransferase.